A 516-amino-acid chain; its full sequence is Multicopper oxidase CueO (516 aa).

Residues 1-28 constitute a signal peptide (tat-type signal); the sequence is MQRRDFLKYSVALGVASALPLWSRAVFA. Plastocyanin-like domains follow at residues 55 to 165, 227 to 292, and 399 to 516; these read GQST…IEDD, PRGW…DNKP, and GGKF…GFTV. Cu cation is bound by residues His-101, His-103, His-141, and His-143. Cu cation contacts are provided by His-443, His-446, His-448, His-499, Cys-500, His-501, and His-505.

The protein belongs to the multicopper oxidase family. Monomer. Requires Cu cation as cofactor. In terms of processing, predicted to be exported by the Tat system. The position of the signal peptide cleavage has not been experimentally proven.

It is found in the periplasm. The catalysed reaction is 4 Cu(+) + O2 + 4 H(+) = 4 Cu(2+) + 2 H2O. In terms of biological role, multicopper oxidase involved in copper homeostasis and copper tolerance under aerobic conditions. Is responsible for the oxidation of Cu(+) to the less harmful Cu(2+) in the periplasm, thereby preventing Cu(+) from entering the cytoplasm. The polypeptide is Multicopper oxidase CueO (cueO) (Escherichia coli O157:H7).